Here is an 85-residue protein sequence, read N- to C-terminus: Large ribosomal subunit protein bL27 (85 aa).

Residues 1–13 (MAKTKSGGSTSNG) show a composition bias toward polar residues. The segment at 1 to 26 (MAKTKSGGSTSNGRDSKGRRLGQKLG) is disordered.

Belongs to the bacterial ribosomal protein bL27 family.

The sequence is that of Large ribosomal subunit protein bL27 from Mycoplasma mobile (strain ATCC 43663 / 163K / NCTC 11711) (Mesomycoplasma mobile).